The primary structure comprises 626 residues: Protein MICRORCHIDIA 2 (626 aa).

Residues 579–626 (MRCEEYIKKENETEQTVKSLEKELEEFKSKCAHLALLVDAKKKEMQQA) adopt a coiled-coil conformation.

The protein belongs to the MORC ATPase protein family. As to quaternary structure, homodimer and heterodimer with MORC6. Component of an RNA-directed DNA methylation (RdDM) complex that contains at least MORC6, MORC1/CRT1, MORC2, SWI3D and SUVH9. Binds directly to SUVH9. Mg(2+) is required as a cofactor. The cofactor is Mn(2+).

It localises to the nucleus. Its subcellular location is the endosome. Its function is as follows. Mediator of defense signaling triggered by distinct classes of R proteins. Required during hypersensitive response (HR) that confers disease resistance to turnip crinkle virus (TCV). Contributes to resistance against Pseudomonas syringae and Hyaloperonospora arabidopsidis, at early stages prior to cytosolic calcium ions Ca(2+) accumulation. Required for pathogen-associated molecular pattern (PAMP)-triggered immunity, basal resistance, non-host resistance and systemic acquired resistance (SAR). Involved in RNA-directed DNA methylation (RdDM) as a component of the RdDM machinery and required for gene silencing. May also be involved in the regulation of chromatin architecture to maintain gene silencing. Exhibits ATPase activity. This chain is Protein MICRORCHIDIA 2, found in Arabidopsis thaliana (Mouse-ear cress).